Reading from the N-terminus, the 405-residue chain is Cystathionine gamma-lyase (405 aa).

Residues Arg-62, Tyr-114, and Arg-119 each contribute to the substrate site. Position 212 is an N6-(pyridoxal phosphate)lysine (Lys-212). Residue Glu-339 coordinates substrate.

It belongs to the trans-sulfuration enzymes family. Homotetramer. Interacts with CALM in a calcium-dependent manner. It depends on pyridoxal 5'-phosphate as a cofactor.

It is found in the cytoplasm. The catalysed reaction is L,L-cystathionine + H2O = 2-oxobutanoate + L-cysteine + NH4(+). It carries out the reaction L-cysteine + H2O = hydrogen sulfide + pyruvate + NH4(+) + H(+). It catalyses the reaction L-homocysteine + H2O = 2-oxobutanoate + hydrogen sulfide + NH4(+) + H(+). The enzyme catalyses L-homoserine = 2-oxobutanoate + NH4(+). The catalysed reaction is L-selenocystathionine + H2O = L-selenocysteine + 2-oxobutanoate + NH4(+). It functions in the pathway amino-acid biosynthesis; L-cysteine biosynthesis; L-cysteine from L-homocysteine and L-serine: step 2/2. In terms of biological role, catalyzes the last step in the trans-sulfuration pathway from L-methionine to L-cysteine in a pyridoxal-5'-phosphate (PLP)-dependent manner, which consists on cleaving the L,L-cystathionine molecule into L-cysteine, ammonia and 2-oxobutanoate. Part of the L-cysteine derived from the trans-sulfuration pathway is utilized for biosynthesis of the ubiquitous antioxidant glutathione. Besides its role in the conversion of L-cystathionine into L-cysteine, it utilizes L-cysteine and L-homocysteine as substrates (at much lower rates than L,L-cystathionine) to produce hydrogen sulfide (H2S). In vitro, it converts two L-cysteine molecules into lanthionine and H2S, and two L-homocysteine molecules to homolanthionine and H2S, which can be particularly relevant under conditions of severe hyperhomocysteinemia. Lanthionine and homolanthionine are structural homologs of L,L-cystathionine that differ by the absence or presence of an extra methylene group, respectively. Acts as a cysteine-protein sulfhydrase by mediating sulfhydration of target proteins: sulfhydration consists of converting -SH groups into -SSH on specific cysteine residues of target proteins such as GAPDH, PTPN1 and NF-kappa-B subunit RELA, thereby regulating their function. By generating the gasotransmitter H2S, it participates in a number of physiological processes such as vasodilation, bone protection, and inflammation. Plays an essential role in myogenesis by contributing to the biogenesis of H2S in skeletal muscle tissue. Can also accept homoserine as substrate. Catalyzes the elimination of selenocystathionine (which can be derived from the diet) to yield selenocysteine, ammonia and 2-oxobutanoate. This is Cystathionine gamma-lyase (CTH) from Macaca fascicularis (Crab-eating macaque).